A 254-amino-acid polypeptide reads, in one-letter code: Very-long-chain (3R)-3-hydroxyacyl-CoA dehydratase 2 (254 aa).

Position 2 is an N-acetylalanine (alanine 2). Residues 2 to 41 (AAVAATAAAKGNGGGGGRAGAGDASGTRKKKGPGPLATAY) lie on the Cytoplasmic side of the membrane. Residues 11-33 (KGNGGGGGRAGAGDASGTRKKKG) form a disordered region. Residues 12-21 (GNGGGGGRAG) are compositionally biased toward gly residues. A helical membrane pass occupies residues 42-60 (LVIYNVVMTAGWLVIAVGL). At 61-79 (VRAYLAKGSYHSLYYSIEK) the chain is on the lumenal side. A helical membrane pass occupies residues 80–97 (PLKFFQTGALLEILHCAI). Residues 98–107 (GIVPSSVVLT) lie on the Cytoplasmic side of the membrane. The chain crosses the membrane as a helical span at residues 108–125 (SFQVMSRVFLIWAVTHSV). Topologically, residues 126 to 130 (KEVQS) are lumenal. Residues 131–146 (EDSVLLFVIAWTITEI) form a helical membrane-spanning segment. Residues 147 to 169 (IRYSFYTFSLLNHLPYLIKWARY) are Cytoplasmic-facing. Residues 170-187 (TLFIVLYPMGVSGELLTI) form a helical membrane-spanning segment. Catalysis depends on residues tyrosine 176 and glutamate 183. The Lumenal portion of the chain corresponds to 188–217 (YAALPFVRQAGLYSISLPNKYNFSFDYYAF). A may be involved in interaction with TECR region spans residues 198 to 214 (GLYSISLPNKYNFSFDY). A glycan (N-linked (GlcNAc...) asparagine) is linked at asparagine 209. A helical membrane pass occupies residues 218–235 (LILIMISYIPIFPQLYFH). Topologically, residues 236–254 (MIHQRRKILSHTEEHKKFE) are cytoplasmic.

This sequence belongs to the very long-chain fatty acids dehydratase HACD family. May interact with enzymes of the ELO family (including ELOVL1); with those enzymes that mediate condensation, the first of the four steps of the reaction cycle responsible for fatty acids elongation, may be part of a larger fatty acids elongase complex. Interacts with BCAP31. Interacts (via the third lumenal loop) with TECR. In terms of tissue distribution, highly expressed in testis, spleen, prostate, colon and heart, followed by moderate expression in thymus, ovary, small intestine, peripheral blood leukocytes, liver, skeletal muscle and pancreas. Weakly detected in kidney, placenta, brain and lung.

The protein resides in the endoplasmic reticulum membrane. The enzyme catalyses a very-long-chain (3R)-3-hydroxyacyl-CoA = a very-long-chain (2E)-enoyl-CoA + H2O. It carries out the reaction (3R)-hydroxyhexadecanoyl-CoA = (2E)-hexadecenoyl-CoA + H2O. It catalyses the reaction (3R)-hydroxyoctadecanoyl-CoA = (2E)-octadecenoyl-CoA + H2O. The catalysed reaction is (3R)-hydroxyeicosanoyl-CoA = (2E)-eicosenoyl-CoA + H2O. The enzyme catalyses (3R)-hydroxydocosanoyl-CoA = (2E)-docosenoyl-CoA + H2O. It carries out the reaction (3R)-hydroxytetracosanoyl-CoA = (2E)-tetracosenoyl-CoA + H2O. It catalyses the reaction (3R)-hydroxyhexacosanoyl-CoA = (2E)-hexacosenoyl-CoA + H2O. It functions in the pathway lipid metabolism; fatty acid biosynthesis. Its function is as follows. Catalyzes the third of the very long-chain fatty acids (VLCFA) elongation four-step cycle (condensation, reduction, dehydration, and reduction). This endoplasmic reticulum-elongation process is characterized by the addition of two carbons to the lipid chain through each cycle. This enzyme catalyzes the dehydration of the 3-hydroxyacyl-CoA intermediate into trans-2,3-enoyl-CoA, within each cycle of elongation. Therefore, it participates in the production of various VLCFAs involved in multiple biological processes as precursors of membrane lipids and lipid mediators. The polypeptide is Very-long-chain (3R)-3-hydroxyacyl-CoA dehydratase 2 (Homo sapiens (Human)).